The primary structure comprises 392 residues: Na(+)/H(+) antiporter NhaA 2 (392 aa).

Helical transmembrane passes span 20–40 (FFAAESAGGLVLMAAALAALI), 61–81 (LSVSHWINDGLMAIFFMLVGL), 99–119 (ALPGFAALGGMLVPALIYVAF), 127–147 (IGGWAIPAATDIAFALGVLSL), 158–178 (IFLSALAILDDLGAVLIIALF), 181–201 (SDLSIPMLLAALGSIAMLVAL), 209–229 (LLPYLIVGALLWFFMLQSGIH), 265–285 (VAFAVVPIFGFANAGVSLSGI), 298–318 (VALGLLVGKQVGIFAMAALAI), 336–356 (GVAALCGIGFTMSLFIGALAF), and 365–385 (EVKVGVLIGSVLSAVLGVVVL).

This sequence belongs to the NhaA Na(+)/H(+) (TC 2.A.33) antiporter family.

The protein localises to the cell inner membrane. It catalyses the reaction Na(+)(in) + 2 H(+)(out) = Na(+)(out) + 2 H(+)(in). In terms of biological role, na(+)/H(+) antiporter that extrudes sodium in exchange for external protons. This chain is Na(+)/H(+) antiporter NhaA 2, found in Pseudomonas syringae pv. syringae (strain B728a).